The sequence spans 434 residues: BEN domain-containing protein 7 (434 aa).

Glycyl lysine isopeptide (Lys-Gly) (interchain with G-Cter in SUMO2) cross-links involve residues Lys16, Lys56, and Lys85. Disordered regions lie at residues 96–151 (PQRS…SNGE) and 212–262 (SRKR…ERTS). Positions 97–150 (QRSNSSTEASQGLHSNSRGAWNELPTQSGQFSGQSGPRSRTFQTQPHISASSNG) are enriched in polar residues. Basic residues predominate over residues 212–222 (SRKRNKKKKVL). Lys244 participates in a covalent cross-link: Glycyl lysine isopeptide (Lys-Gly) (interchain with G-Cter in SUMO2). A BEN domain is found at 289-399 (GFDVFMPKSQ…RRLKRGSAEV (111 aa)). The residue at position 326 (Thr326) is a Phosphothreonine. Ser330 bears the Phosphoserine mark. The tract at residues 414-434 (TGHTFVIKRETPEDPEPGSVA) is disordered.

The chain is BEN domain-containing protein 7 (Bend7) from Mus musculus (Mouse).